Reading from the N-terminus, the 244-residue chain is Kallikrein-6 (244 aa).

An N-terminal signal peptide occupies residues 1 to 16; it reads MKKLMVVLSLIAAAWA. A propeptide spans 17–21 (activation peptide); it reads EEQNK. The Peptidase S1 domain occupies 22-242; that stretch reads LVHGGPCDKT…YTNWIQKTIQ (221 aa). 6 cysteine pairs are disulfide-bonded: C28–C157, C47–C63, C131–C231, C138–C203, C168–C182, and C193–C218. Catalysis depends on charge relay system residues H62 and D106. N-linked (GlcNAc...) asparagine glycosylation is present at N134. S197 functions as the Charge relay system in the catalytic mechanism.

Post-translationally, inactivated by autolytic cleavage after Arg-80. As to expression, in fluids, highest levels found in milk of lactating women followed by cerebrospinal fluid, nipple aspirate fluid and breast cyst fluid. Also found in serum, seminal plasma and some amniotic fluids and breast tumor cytosolic extracts. Not detected in urine. At the tissue level, highest concentrations found in glandular tissues such as salivary glands followed by lung, colon, fallopian tube, placenta, breast, pituitary and kidney. Not detected in skin, spleen, bone, thyroid, heart, ureter, liver, muscle, endometrium, testis, pancreas, seminal vesicle, ovary, adrenals and prostate. In brain, detected in gray matter neurons (at protein level). Colocalizes with pathological inclusions such as Lewy bodies and glial cytoplasmic inclusions. Overexpressed in primary breast tumors but not expressed in metastatic tumors.

Its subcellular location is the secreted. The protein resides in the nucleus. It localises to the nucleolus. The protein localises to the cytoplasm. It is found in the mitochondrion. Its subcellular location is the microsome. Its activity is regulated as follows. Inhibited by a range of serine protease inhibitors including soybean trypsin inhibitor, benzamidine and serpins. Activated by a range of glycosaminoglycans including chondroitin sulfate, dermatan sulfate, heparan sulfate and heparin. Functionally, serine protease which exhibits a preference for Arg over Lys in the substrate P1 position and for Ser or Pro in the P2 position. Shows activity against amyloid precursor protein, myelin basic protein, gelatin, casein and extracellular matrix proteins such as fibronectin, laminin, vitronectin and collagen. Degrades alpha-synuclein and prevents its polymerization, indicating that it may be involved in the pathogenesis of Parkinson disease and other synucleinopathies. May be involved in regulation of axon outgrowth following spinal cord injury. Tumor cells treated with a neutralizing KLK6 antibody migrate less than control cells, suggesting a role in invasion and metastasis. This is Kallikrein-6 (KLK6) from Homo sapiens (Human).